The primary structure comprises 137 residues: Large ribosomal subunit protein bL17 (137 aa).

Belongs to the bacterial ribosomal protein bL17 family. In terms of assembly, part of the 50S ribosomal subunit. Contacts protein L32.

This chain is Large ribosomal subunit protein bL17, found in Bradyrhizobium sp. (strain BTAi1 / ATCC BAA-1182).